Reading from the N-terminus, the 596-residue chain is Aspartate--tRNA(Asp/Asn) ligase (596 aa).

Residue E175 coordinates L-aspartate. The tract at residues 199-202 (QQYK) is aspartate. Positions 221 and 454 each coordinate L-aspartate. An ATP-binding site is contributed by 221–223 (RDE). Residue E488 participates in ATP binding. L-aspartate is bound at residue R495. Residue 540 to 543 (GIDR) participates in ATP binding.

This sequence belongs to the class-II aminoacyl-tRNA synthetase family. Type 1 subfamily. As to quaternary structure, homodimer.

It is found in the cytoplasm. It catalyses the reaction tRNA(Asx) + L-aspartate + ATP = L-aspartyl-tRNA(Asx) + AMP + diphosphate. In terms of biological role, aspartyl-tRNA synthetase with relaxed tRNA specificity since it is able to aspartylate not only its cognate tRNA(Asp) but also tRNA(Asn). Reaction proceeds in two steps: L-aspartate is first activated by ATP to form Asp-AMP and then transferred to the acceptor end of tRNA(Asp/Asn). In Rhizobium johnstonii (strain DSM 114642 / LMG 32736 / 3841) (Rhizobium leguminosarum bv. viciae), this protein is Aspartate--tRNA(Asp/Asn) ligase.